The primary structure comprises 1481 residues: Cystic fibrosis transmembrane conductance regulator (1481 aa).

Residues M1–F77 lie on the Cytoplasmic side of the membrane. A helical transmembrane segment spans residues F78–Q98. The ABC transmembrane type-1 1 domain occupies F81 to L365. The Extracellular segment spans residues P99–Y122. The helical transmembrane segment at L123–H146 threads the bilayer. Residues H147–L195 are Cytoplasmic-facing. Residues A196–W216 traverse the membrane as a helical segment. The Extracellular segment spans residues E217–S222. Residues A223–M243 form a helical membrane-spanning segment. The Cytoplasmic portion of the chain corresponds to M244 to K298. Residues A299 to F319 traverse the membrane as a helical segment. Residues L320 to T339 lie on the Extracellular side of the membrane. Residues I340–V358 form a helical membrane-spanning segment. The Cytoplasmic portion of the chain corresponds to Q359–S858. Residues W401, S434, G458 to T465, and Q493 contribute to the ATP site. The region spanning N423–G646 is the ABC transporter 1 domain. The S-palmitoyl cysteine moiety is linked to residue C524. 2 positions are modified to phosphoserine: S549 and S660. The segment at S654–E831 is disordered R region. A Phosphoserine; by PKA modification is found at S670. A Phosphoserine modification is found at S686. Residue K688 forms a Glycyl lysine isopeptide (Lys-Gly) (interchain with G-Cter in ubiquitin) linkage. Phosphoserine is present on residues S700 and S712. Phosphothreonine is present on T717. A phosphoserine mark is found at S737, S768, S790, S795, and S813. The chain crosses the membrane as a helical span at residues L859–V879. Residues L859–S1155 enclose the ABC transmembrane type-1 2 domain. Residues V880–I918 lie on the Extracellular side of the membrane. N-linked (GlcNAc...) asparagine glycosylation is found at N894, N900, and N909. Residues Y919 to H939 form a discontinuously helical membrane-spanning segment. At T940–T990 the chain is on the cytoplasmic side. The chain crosses the membrane as a helical span at residues I991–L1011. Over Q1012–P1013 the chain is Extracellular. Residues Y1014 to L1034 traverse the membrane as a helical segment. Residues H1035–T1095 are Cytoplasmic-facing. A helical membrane pass occupies residues L1096–F1116. Over I1117–G1130 the chain is Extracellular. The chain crosses the membrane as a helical span at residues I1131–I1151. Topologically, residues D1152 to L1481 are cytoplasmic. The 246-residue stretch at V1199–S1444 folds into the ABC transporter 2 domain. ATP contacts are provided by residues Y1220 and G1245 to S1252. Residues R1387–L1481 are interaction with GORASP2. C1396 carries S-palmitoyl cysteine lipidation. 2 positions are modified to phosphoserine: S1445 and S1457. Residues K1449–L1481 are disordered. Residues L1450–R1462 are compositionally biased toward basic residues. Acidic residues predominate over residues E1471–L1481. The PDZ-binding motif lies at T1479 to L1481.

Belongs to the ABC transporter superfamily. ABCC family. CFTR transporter (TC 3.A.1.202) subfamily. As to quaternary structure, monomer; does not require oligomerization for channel activity. May form oligomers in the membrane. Interacts with SLC26A3, SLC26A6 and NHERF1. Interacts with SHANK2. Interacts with MYO6. Interacts (via C-terminus) with GOPC (via PDZ domain); this promotes CFTR internalization and thereby decreases channel activity. Interacts with SLC4A7 through NHERF1. Found in a complex with MYO5B and RAB11A. Interacts with ANO1. Interacts with SLC26A8. Interacts with AHCYL1; the interaction increases CFTR activity. Interacts with CSE1L. The core-glycosylated form interacts with GORASP2 (via PDZ GRASP-type 1 domain) in respone to ER stress. Interacts with MARCHF2; the interaction leads to CFTR ubiqtuitination and degradation. Interacts with ADGRG2. Post-translationally, N-glycosylated. Phosphorylated; cAMP treatment promotes phosphorylation and activates the channel. Dephosphorylation decreases the ATPase activity (in vitro). Phosphorylation at PKA sites activates the channel. Phosphorylation at PKC sites enhances the response to phosphorylation by PKA. Phosphorylated by AMPK; this inhibits channel activity. In terms of processing, ubiquitinated, leading to its degradation in the lysosome. Deubiquitination by USP10 in early endosomes enhances its endocytic recycling to the cell membrane. Ubiquitinated by RNF185 during ER stress. Ubiquitinated by MARCHF2. As to expression, isoform 1 is expressed in the pancreas. Isoform 2 is specifically expressed in the ventricle.

Its subcellular location is the apical cell membrane. It localises to the early endosome membrane. It is found in the cell membrane. The protein resides in the recycling endosome membrane. The protein localises to the endoplasmic reticulum membrane. Its subcellular location is the nucleus. The catalysed reaction is ATP + H2O + closed Cl(-) channel = ADP + phosphate + open Cl(-) channel.. It catalyses the reaction chloride(in) = chloride(out). It carries out the reaction hydrogencarbonate(in) = hydrogencarbonate(out). The enzyme catalyses ATP + H2O = ADP + phosphate + H(+). Functionally, epithelial ion channel that plays an important role in the regulation of epithelial ion and water transport and fluid homeostasis. Mediates the transport of chloride ions across the cell membrane. Possesses an intrinsic ATPase activity and utilizes ATP to gate its channel; the passive flow of anions through the channel is gated by cycles of ATP binding and hydrolysis by the ATP-binding domains. The ion channel is also permeable to HCO(3)(-); selectivity depends on the extracellular chloride concentration. Exerts its function also by modulating the activity of other ion channels and transporters. Contributes to the regulation of the pH and the ion content of the epithelial fluid layer. Modulates the activity of the epithelial sodium channel (ENaC) complex, in part by regulating the cell surface expression of the ENaC complex. May regulate bicarbonate secretion and salvage in epithelial cells by regulating the transporter SLC4A7. Can inhibit the chloride channel activity of ANO1. Plays a role in the chloride and bicarbonate homeostasis during sperm epididymal maturation and capacitation. This Oryctolagus cuniculus (Rabbit) protein is Cystic fibrosis transmembrane conductance regulator.